Consider the following 398-residue polypeptide: Mannitol-1-phosphate 5-dehydrogenase (398 aa).

10–21 lines the NAD(+) pocket; the sequence is AVHFGAGNIGRG. Residue Lys-221 is part of the active site.

It belongs to the mannitol dehydrogenase family. As to quaternary structure, monomer.

The catalysed reaction is D-mannitol 1-phosphate + NAD(+) = beta-D-fructose 6-phosphate + NADH + H(+). Catalyzes the NAD(H)-dependent interconversion of D-fructose 6-phosphate and D-mannitol 1-phosphate in the mannitol metabolic pathway. In Chaetomium globosum (strain ATCC 6205 / CBS 148.51 / DSM 1962 / NBRC 6347 / NRRL 1970) (Soil fungus), this protein is Mannitol-1-phosphate 5-dehydrogenase.